We begin with the raw amino-acid sequence, 343 residues long: ABC transporter riboflavin-binding protein RfuA (343 aa).

The N-terminal stretch at 1–19 (MNGAVCVLSALIAVFTCFS) is a signal peptide. Cys20 is lipidated: N-palmitoyl cysteine. Cys20 is lipidated: S-diacylglycerol cysteine. Residues 43–46 (SPVY), Asp124, Gln140, Tyr176, Trp208, and Asp255 contribute to the riboflavin site.

Belongs to the BMP lipoprotein family. Monomer in solution. The complex is probably composed of two ATP-binding proteins (RfuB), two transmembrane proteins (RfuC and RfuD) and a solute-binding protein (RfuA).

The protein resides in the cell inner membrane. Functionally, probably part of the ABC transporter complex RfuABCD involved in riboflavin import. Binds riboflavin. The polypeptide is ABC transporter riboflavin-binding protein RfuA (Treponema pallidum (strain Nichols)).